We begin with the raw amino-acid sequence, 730 residues long: Meiotically up-regulated gene 70 protein (730 aa).

A disordered region spans residues 1–27; sequence MTVGTLSVVSSTASDTASHVSDTRKRQ. The span at 7-20 shows a compositional bias: low complexity; that stretch reads SVVSSTASDTASHV. CBS domains follow at residues 69–127, 135–200, 263–319, and 328–385; these read ALDP…LNAR, MSTS…RIAR, SSEE…GLDP, and MTPH…PEEE. The next 2 helical transmembrane spans lie at 290 to 310 and 358 to 378; these read AVLV…DVVL and VVDE…ATAI. Positions 420-517 are disordered; the sequence is ENYDVNPPLP…ENGSNSFAAS (98 aa). Polar residues-rich tracts occupy residues 458-470 and 480-515; these read AWQN…NNKP and YNFS…NSFA. The region spanning 572–649 is the PB1 domain; it reads PSQFTIKYRS…ARRRGLPRLE (78 aa). The helical transmembrane segment at 706 to 726 threads the bilayer; it reads PIYIGIVSSSIVILAVSMWYL.

Its subcellular location is the cytoplasm. The protein resides in the nucleus membrane. Has a role in meiosis. The chain is Meiotically up-regulated gene 70 protein (mug70) from Schizosaccharomyces pombe (strain 972 / ATCC 24843) (Fission yeast).